A 206-amino-acid chain; its full sequence is Holliday junction branch migration complex subunit RuvA (206 aa).

Residues M1 to L68 form a domain I region. Residues E69–A147 form a domain II region. Residues A147–R151 are flexible linker. Residues A152 to G206 form a domain III region.

It belongs to the RuvA family. Homotetramer. Forms an RuvA(8)-RuvB(12)-Holliday junction (HJ) complex. HJ DNA is sandwiched between 2 RuvA tetramers; dsDNA enters through RuvA and exits via RuvB. An RuvB hexamer assembles on each DNA strand where it exits the tetramer. Each RuvB hexamer is contacted by two RuvA subunits (via domain III) on 2 adjacent RuvB subunits; this complex drives branch migration. In the full resolvosome a probable DNA-RuvA(4)-RuvB(12)-RuvC(2) complex forms which resolves the HJ.

The protein resides in the cytoplasm. Its function is as follows. The RuvA-RuvB-RuvC complex processes Holliday junction (HJ) DNA during genetic recombination and DNA repair, while the RuvA-RuvB complex plays an important role in the rescue of blocked DNA replication forks via replication fork reversal (RFR). RuvA specifically binds to HJ cruciform DNA, conferring on it an open structure. The RuvB hexamer acts as an ATP-dependent pump, pulling dsDNA into and through the RuvAB complex. HJ branch migration allows RuvC to scan DNA until it finds its consensus sequence, where it cleaves and resolves the cruciform DNA. This is Holliday junction branch migration complex subunit RuvA from Gloeobacter violaceus (strain ATCC 29082 / PCC 7421).